Consider the following 383-residue polypeptide: Arginine biosynthesis bifunctional protein ArgJ (383 aa).

Residues threonine 146, lysine 168, threonine 179, glutamate 259, asparagine 378, and serine 383 each contribute to the substrate site. The Nucleophile role is filled by threonine 179.

The protein belongs to the ArgJ family. In terms of assembly, heterotetramer of two alpha and two beta chains.

Its subcellular location is the cytoplasm. It catalyses the reaction N(2)-acetyl-L-ornithine + L-glutamate = N-acetyl-L-glutamate + L-ornithine. The catalysed reaction is L-glutamate + acetyl-CoA = N-acetyl-L-glutamate + CoA + H(+). It participates in amino-acid biosynthesis; L-arginine biosynthesis; L-ornithine and N-acetyl-L-glutamate from L-glutamate and N(2)-acetyl-L-ornithine (cyclic): step 1/1. Its pathway is amino-acid biosynthesis; L-arginine biosynthesis; N(2)-acetyl-L-ornithine from L-glutamate: step 1/4. Its function is as follows. Catalyzes two activities which are involved in the cyclic version of arginine biosynthesis: the synthesis of N-acetylglutamate from glutamate and acetyl-CoA as the acetyl donor, and of ornithine by transacetylation between N(2)-acetylornithine and glutamate. This chain is Arginine biosynthesis bifunctional protein ArgJ, found in Streptomyces coelicolor (strain ATCC BAA-471 / A3(2) / M145).